A 571-amino-acid polypeptide reads, in one-letter code: Urease subunit alpha (571 aa).

Residues 134–571 (GAIDTHIHFI…LPMAQRYFLF (438 aa)) form the Urease domain. Residues His139, His141, and Lys222 each coordinate Ni(2+). An N6-carboxylysine modification is found at Lys222. Residue His224 coordinates substrate. Residues His251 and His277 each coordinate Ni(2+). Residue His325 is the Proton donor of the active site. Asp365 is a Ni(2+) binding site.

Belongs to the metallo-dependent hydrolases superfamily. Urease alpha subunit family. In terms of assembly, heterotrimer of UreA (gamma), UreB (beta) and UreC (alpha) subunits. Three heterotrimers associate to form the active enzyme. The cofactor is Ni cation. Post-translationally, carboxylation allows a single lysine to coordinate two nickel ions.

It localises to the cytoplasm. It catalyses the reaction urea + 2 H2O + H(+) = hydrogencarbonate + 2 NH4(+). The protein operates within nitrogen metabolism; urea degradation; CO(2) and NH(3) from urea (urease route): step 1/1. In Bordetella pertussis (strain Tohama I / ATCC BAA-589 / NCTC 13251), this protein is Urease subunit alpha.